Here is a 259-residue protein sequence, read N- to C-terminus: uncharacterized protein (259 aa).

6 residues coordinate a divalent metal cation: His9, His11, Glu97, His133, His157, and Asp207.

It belongs to the metallo-dependent hydrolases superfamily. TatD-type hydrolase family. A divalent metal cation serves as cofactor.

This is an uncharacterized protein from Escherichia coli (strain K12).